We begin with the raw amino-acid sequence, 626 residues long: Transketolase-like protein 2 (626 aa).

His-37 contributes to the substrate binding site. Thiamine diphosphate contacts are provided by residues Ser-40, His-77, and 123–125 (GSL). Asp-155 contributes to the Mg(2+) binding site. Gly-156 and Asn-185 together coordinate thiamine diphosphate. The Mg(2+) site is built by Asn-185 and Leu-187. Residues Lys-247 and His-261 each coordinate thiamine diphosphate. Substrate-binding residues include His-261 and Ser-348. 2 residues coordinate thiamine diphosphate: Glu-369 and Phe-395. Glu-369 acts as the Proton donor in catalysis. Residues His-419 and Asp-427 each contribute to the substrate site. Thiamine diphosphate is bound at residue Gln-431. Arg-477 is a binding site for substrate.

The protein belongs to the transketolase family. Homodimer. Mg(2+) serves as cofactor. It depends on Ca(2+) as a cofactor. The cofactor is Mn(2+). Co(2+) is required as a cofactor. Requires thiamine diphosphate as cofactor.

It carries out the reaction D-sedoheptulose 7-phosphate + D-glyceraldehyde 3-phosphate = aldehydo-D-ribose 5-phosphate + D-xylulose 5-phosphate. Plays an essential role in total transketolase activity and cell proliferation in cancer cells; after transfection with anti-TKTL1 siRNA, total transketolase activity dramatically decreases and proliferation was significantly inhibited in cancer cells. Plays a pivotal role in carcinogenesis. The protein is Transketolase-like protein 2 (TKTL2) of Bos taurus (Bovine).